The primary structure comprises 1379 residues: Protein three rows (1379 aa).

Residues 1031-1037 (VEPIRKQ) are separase cleavage-site. Disordered stretches follow at residues 1206-1231 (PEDK…KQSA), 1248-1309 (PSAT…ATSK), and 1328-1379 (ITTS…RHRH). The span at 1213 to 1228 (ATGSVSAVKNTASKVK) shows a compositional bias: polar residues. The segment covering 1248–1267 (PSATSCSSSGGSGTENTPPS) has biased composition (low complexity).

As to quaternary structure, interacts with pim and Sse. Cleavage of thr contributes to inactivation of Sse. Post-translationally, proteolytically cleaved after the metaphase-to-anaphase transition, C-terminal cleavage product is degraded. Cleavage can only proceed within complexes that contain active Sse. During embryogenesis, expressed in Malpighian tubule buds, and epithelia of foregut and hindgut.

It localises to the cytoplasm. Functionally, required specifically for chromosome disjunction during all mitoses; maternally provided protein is sufficient until mitosis 14 then zygotic protein is required. Involved in formation and/or maintenance of epithelial structures: bud extension during Malpighian tubule development, and foregut and hindgut morphogenesis. The protein is Protein three rows (thr) of Drosophila melanogaster (Fruit fly).